The primary structure comprises 604 residues: uncharacterized protein (604 aa).

This sequence belongs to the glycosyltransferase 2 family.

This is an uncharacterized protein from Rickettsia conorii (strain ATCC VR-613 / Malish 7).